The chain runs to 788 residues: Endonuclease MutS2 (788 aa).

332–339 (GPNTGGKT) contributes to the ATP binding site. The Smr domain occupies 713 to 788 (VDLRGMDAEE…GTGVTVVEIK (76 aa)).

It belongs to the DNA mismatch repair MutS family. MutS2 subfamily. Homodimer. Binds to stalled ribosomes, contacting rRNA.

Its function is as follows. Endonuclease that is involved in the suppression of homologous recombination and thus may have a key role in the control of bacterial genetic diversity. In terms of biological role, acts as a ribosome collision sensor, splitting the ribosome into its 2 subunits. Detects stalled/collided 70S ribosomes which it binds and splits by an ATP-hydrolysis driven conformational change. Acts upstream of the ribosome quality control system (RQC), a ribosome-associated complex that mediates the extraction of incompletely synthesized nascent chains from stalled ribosomes and their subsequent degradation. Probably generates substrates for RQC. The sequence is that of Endonuclease MutS2 from Clostridium botulinum (strain Loch Maree / Type A3).